The chain runs to 201 residues: Recombination protein RecR (201 aa).

The C4-type zinc finger occupies 60-75 (CSCCGNVDTSDPCTIC). Residues 83–178 (ATLIVVEDVS…RVTRLAHGVP (96 aa)) enclose the Toprim domain.

The protein belongs to the RecR family.

Its function is as follows. May play a role in DNA repair. It seems to be involved in an RecBC-independent recombinational process of DNA repair. It may act with RecF and RecO. The protein is Recombination protein RecR of Brucella abortus biovar 1 (strain 9-941).